We begin with the raw amino-acid sequence, 316 residues long: Beta-ketoacyl-[acyl-carrier-protein] synthase III (316 aa).

Residues C112 and H243 contribute to the active site. The interval 244–248 (QANLR) is ACP-binding. Residue N273 is part of the active site.

This sequence belongs to the thiolase-like superfamily. FabH family. Homodimer.

The protein localises to the cytoplasm. It carries out the reaction malonyl-[ACP] + acetyl-CoA + H(+) = 3-oxobutanoyl-[ACP] + CO2 + CoA. Its pathway is lipid metabolism; fatty acid biosynthesis. In terms of biological role, catalyzes the condensation reaction of fatty acid synthesis by the addition to an acyl acceptor of two carbons from malonyl-ACP. Catalyzes the first condensation reaction which initiates fatty acid synthesis and may therefore play a role in governing the total rate of fatty acid production. Possesses both acetoacetyl-ACP synthase and acetyl transacylase activities. Its substrate specificity determines the biosynthesis of branched-chain and/or straight-chain of fatty acids. This Haemophilus influenzae (strain 86-028NP) protein is Beta-ketoacyl-[acyl-carrier-protein] synthase III.